The following is a 585-amino-acid chain: Serine/threonine-protein kinase Nek3 (585 aa).

Positions 4–258 (YEVLEQIGKG…AAELLKHPHL (255 aa)) constitute a Protein kinase domain. Residues 10–18 (IGKGSFGSA) and Lys33 contribute to the ATP site. Asp129 serves as the catalytic Proton acceptor. Disordered regions lie at residues 354–413 (GNHS…TPVN) and 489–511 (DSSK…SNPL). Polar residues-rich tracts occupy residues 400 to 413 (RASQ…TPVN) and 498 to 511 (SSDP…SNPL).

Belongs to the protein kinase superfamily. NEK Ser/Thr protein kinase family. NIMA subfamily. As to quaternary structure, interacts with PLIM2B. In terms of tissue distribution, expressed in pollen grains.

It carries out the reaction L-seryl-[protein] + ATP = O-phospho-L-seryl-[protein] + ADP + H(+). The enzyme catalyses L-threonyl-[protein] + ATP = O-phospho-L-threonyl-[protein] + ADP + H(+). May be involved in plant development processes. May function downstream of DCW11 in retrograde signaling from the mitochondria to the nucleus. Seems to be involved in the mechanism of cytoplasmic male sterility (CMS) occurrence. This is Serine/threonine-protein kinase Nek3 from Oryza sativa subsp. japonica (Rice).